Here is a 631-residue protein sequence, read N- to C-terminus: Phosphomethylpyrimidine synthase (631 aa).

Substrate is bound by residues Asn-239, Met-268, Tyr-297, His-333, 353–355 (SRG), 394–397 (DGLR), and Glu-433. His-437 lines the Zn(2+) pocket. A substrate-binding site is contributed by Tyr-460. His-501 contributes to the Zn(2+) binding site. [4Fe-4S] cluster-binding residues include Cys-581, Cys-584, and Cys-589.

The protein belongs to the ThiC family. Homodimer. [4Fe-4S] cluster serves as cofactor.

It catalyses the reaction 5-amino-1-(5-phospho-beta-D-ribosyl)imidazole + S-adenosyl-L-methionine = 4-amino-2-methyl-5-(phosphooxymethyl)pyrimidine + CO + 5'-deoxyadenosine + formate + L-methionine + 3 H(+). It functions in the pathway cofactor biosynthesis; thiamine diphosphate biosynthesis. In terms of biological role, catalyzes the synthesis of the hydroxymethylpyrimidine phosphate (HMP-P) moiety of thiamine from aminoimidazole ribotide (AIR) in a radical S-adenosyl-L-methionine (SAM)-dependent reaction. This is Phosphomethylpyrimidine synthase from Shigella sonnei (strain Ss046).